Here is a 321-residue protein sequence, read N- to C-terminus: MTKYALVGDVGGTNARLALCDVDSGEILKAKTYSGLDYPSLEAVVRVYLEEHNATVTDGCIAIACPITGDWVAMTNHVWAFSVAEMKKNLGFDHLEIINDFTAVSMAIPMLKTDHLIQFGGGEPQPNKPIAVYGAGTGLGVAHLVHVDKRWVSLPGEGGHVDFAPNSEEEAIILEQLRAEVGHVSAERVLSGPGLVNLYRAIVKADGRLPDNLRPKDITERALDDSCTDCRRALSLFCVIMGRFGGNLALTLGTFGGVYIAGGIVPRFLDFFTSSGFRGGFEDKGRFKSYVQDIPVYLIVHDQPGLLGAGAHLRQTLGQIL.

8 to 13 (GDVGGT) contacts ATP.

This sequence belongs to the bacterial glucokinase family.

It localises to the cytoplasm. The catalysed reaction is D-glucose + ATP = D-glucose 6-phosphate + ADP + H(+). This chain is Glucokinase, found in Cronobacter sakazakii (strain ATCC BAA-894) (Enterobacter sakazakii).